The sequence spans 1083 residues: Alpha-mannosidase (1083 aa).

Position 2 is an N-acetylserine (S2). H298, D300, D411, and H626 together coordinate Zn(2+). The active-site Nucleophile is D411.

Belongs to the glycosyl hydrolase 38 family. As to quaternary structure, composed of isoforms with three constituent polypeptides described as [(107 kDa)-n (73 kDa)-(6-n) (31 kDa)-(6-n)], where n is 0-6. The 73 kDa and the 31 kDa polypeptides may be proteolytic derivatives of the 107 kDa polypeptide in the vacuole. Oligomerizes in the cytoplasm and retains its oligomeric form during import into the vacuole. Zn(2+) serves as cofactor. Post-translationally, the N-terminus is blocked.

The protein localises to the vacuole. It catalyses the reaction Hydrolysis of terminal, non-reducing alpha-D-mannose residues in alpha-D-mannosides.. Functionally, degrades free oligosaccharides in the vacuole. The sequence is that of Alpha-mannosidase (AMS1) from Saccharomyces cerevisiae (strain ATCC 204508 / S288c) (Baker's yeast).